Here is a 114-residue protein sequence, read N- to C-terminus: Cystatin Pr15a (114 aa).

A signal peptide spans 1–22 (MFTVKLLAFMVVAVSLQHLAEA). A Cystatin domain is found at 29–83 (GCPVEVDPNREDIKKSLAHVMAAKNSPDELVRIIKASTQVVNGIKYKVVFEVKNP).

This sequence belongs to the cystatin family. Expressed by the venom gland (anterior main gland) (at protein level).

It is found in the secreted. The polypeptide is Cystatin Pr15a (Platymeris rhadamanthus (Red spot assassin bug)).